We begin with the raw amino-acid sequence, 73 residues long: UPF0435 protein BH2488 (73 aa).

The protein belongs to the UPF0435 family.

The sequence is that of UPF0435 protein BH2488 from Halalkalibacterium halodurans (strain ATCC BAA-125 / DSM 18197 / FERM 7344 / JCM 9153 / C-125) (Bacillus halodurans).